The primary structure comprises 205 residues: Holliday junction resolvase RecU (205 aa).

The tract at residues 1-26 (MIRYPNGKSYQPIQPIGTKKRISGES) is disordered. Mg(2+)-binding residues include T86, D88, E101, and Q120.

This sequence belongs to the RecU family. Mg(2+) serves as cofactor.

It localises to the cytoplasm. The catalysed reaction is Endonucleolytic cleavage at a junction such as a reciprocal single-stranded crossover between two homologous DNA duplexes (Holliday junction).. In terms of biological role, endonuclease that resolves Holliday junction intermediates in genetic recombination. Cleaves mobile four-strand junctions by introducing symmetrical nicks in paired strands. Promotes annealing of linear ssDNA with homologous dsDNA. Required for DNA repair, homologous recombination and chromosome segregation. In Bacillus pumilus (strain SAFR-032), this protein is Holliday junction resolvase RecU.